The chain runs to 467 residues: Gamma-aminobutyric acid receptor subunit gamma-3 (467 aa).

Positions 1-17 are cleaved as a signal peptide; it reads MAPKLLLLLCLFSGLHA. The Extracellular segment spans residues 18 to 256; the sequence is RSRKVEEDEY…FELSRRMGYF (239 aa). N-linked (GlcNAc...) asparagine glycosylation occurs at Asn-110. The cysteines at positions 171 and 185 are disulfide-linked. N-linked (GlcNAc...) asparagine glycosylation is present at Asn-228. The helical transmembrane segment at 257 to 277 threads the bilayer; it reads TIQTYIPCILTVVLSWVSFWI. Residues 278–283 are Cytoplasmic-facing; sequence KKDATP. A helical membrane pass occupies residues 284–303; it reads ARTALGITTVLTMTTLSTIA. Topologically, residues 304 to 311 are extracellular; it reads RKSLPRVS. Residues 312–332 traverse the membrane as a helical segment; sequence YVTAMDLFVTVCFLFVFAALM. At 333-446 the chain is on the cytoplasmic side; the sequence is EYATLNYYSS…DILELDSYSR (114 aa). Residues 447–467 form a helical membrane-spanning segment; that stretch reads VFFPTSFLLFNLVYWVGYLYL.

The protein belongs to the ligand-gated ion channel (TC 1.A.9) family. Gamma-aminobutyric acid receptor (TC 1.A.9.5) subfamily. GABRG3 sub-subfamily. In terms of assembly, heteropentamer, formed by a combination of alpha (GABRA1-6), beta (GABRB1-3), gamma (GABRG1-3), delta (GABRD), epsilon (GABRE), rho (GABRR1-3), pi (GABRP) and theta (GABRQ) chains, each subunit exhibiting distinct physiological and pharmacological properties. In terms of processing, may be palmitoylated. As to expression, expressed in brain.

It is found in the postsynaptic cell membrane. The protein localises to the cell membrane. The enzyme catalyses chloride(in) = chloride(out). Its function is as follows. Gamma subunit of the heteropentameric ligand-gated chloride channel gated by gamma-aminobutyric acid (GABA), a major inhibitory neurotransmitter in the brain. GABA-gated chloride channels, also named GABA(A) receptors (GABAAR), consist of five subunits arranged around a central pore and contain GABA active binding site(s) located at the alpha and beta subunit interface(s). When activated by GABA, GABAARs selectively allow the flow of chloride across the cell membrane down their electrochemical gradient. This Homo sapiens (Human) protein is Gamma-aminobutyric acid receptor subunit gamma-3.